The sequence spans 119 residues: MKKLTLKKSERIRKRRSYLQIYQHGKRSFTKHFTIVVSENDLDFPRLGMTVTKKIGNAVKRNRIKRLIREFFRLNKDRFKASQDIVIIAKGNTSSMKYADVCRELGVLLTKEPQNITQE.

Belongs to the RnpA family. Consists of a catalytic RNA component (M1 or rnpB) and a protein subunit.

It catalyses the reaction Endonucleolytic cleavage of RNA, removing 5'-extranucleotides from tRNA precursor.. Its function is as follows. RNaseP catalyzes the removal of the 5'-leader sequence from pre-tRNA to produce the mature 5'-terminus. It can also cleave other RNA substrates such as 4.5S RNA. The protein component plays an auxiliary but essential role in vivo by binding to the 5'-leader sequence and broadening the substrate specificity of the ribozyme. The protein is Ribonuclease P protein component of Syntrophus aciditrophicus (strain SB).